Reading from the N-terminus, the 242-residue chain is ATP synthase subunit a (242 aa).

Helical transmembrane passes span 29-49, 84-104, 114-134, 140-160, 181-201, and 203-223; these read SSIY…LAFY, FIPL…LGMT, IIVT…VGFV, FLTL…MIVI, MAGH…MIYL, and FLPI…AILQ.

This sequence belongs to the ATPase A chain family. As to quaternary structure, F-type ATPases have 2 components, CF(1) - the catalytic core - and CF(0) - the membrane proton channel. CF(1) has five subunits: alpha(3), beta(3), gamma(1), delta(1), epsilon(1). CF(0) has three main subunits: a(1), b(2) and c(9-12). The alpha and beta chains form an alternating ring which encloses part of the gamma chain. CF(1) is attached to CF(0) by a central stalk formed by the gamma and epsilon chains, while a peripheral stalk is formed by the delta and b chains.

The protein resides in the cell inner membrane. Key component of the proton channel; it plays a direct role in the translocation of protons across the membrane. This chain is ATP synthase subunit a, found in Rickettsia akari (strain Hartford).